Here is a 239-residue protein sequence, read N- to C-terminus: Phosducin-like protein 3 (239 aa).

The residue at position 1 (Met-1) is an N-acetylmethionine. The 149-residue stretch at Glu-32–Gly-180 folds into the Phosducin domain. 3 positions are modified to phosphoserine: Ser-43, Ser-234, and Ser-236. Positions Phe-91–Asp-239 are thioredoxin fold.

It belongs to the phosducin family. Interacts (via thioredoxin fold region) with KDR/VEGFR2 (via juxtamembrane domain). Forms ternary complexes with the chaperonin CCT complex and actin substrate, leading to inhibition of actin folding. Interacts with XIAP (via BIR 3 and RING domain). Interacts with HSP90AA1 and HSP90AB1. N-terminal methionine acetylation destabilizes the protein.

It localises to the cytoplasm. The protein resides in the perinuclear region. The protein localises to the endoplasmic reticulum. Functionally, acts as a chaperone for the angiogenic VEGF receptor KDR/VEGFR2, increasing its abundance by inhibiting its ubiquitination and degradation. Inhibits the folding activity of the chaperonin-containing T-complex (CCT) which leads to inhibition of cytoskeletal actin folding. Acts as a chaperone during heat shock alongside HSP90 and HSP40/70 chaperone complexes. Modulates the activation of caspases during apoptosis. This is Phosducin-like protein 3 (PDCL3) from Pongo abelii (Sumatran orangutan).